We begin with the raw amino-acid sequence, 260 residues long: BTB/POZ domain-containing protein KCTD21 (260 aa).

Residues 3-72 (DPITLNVGGK…LRTSHLDLPE (70 aa)) form the BTB domain. Residues 88-112 (QVQPLIEALQEKEVELSKAEKNAML) are a coiled coil.

Homopentamer. Interacts with KCTD11; KCTD21 and KCTD11 may associate in pentameric assemblies. Interacts (via BTB domain) with CUL3; indicative for a participation in a BCR (BTB-CUL3-RBX1) E3 ubiquitin-protein ligase complex. Highly expressed in cerebellum and brain. Expressed in adult cerebellum (at protein level).

It participates in protein modification; protein ubiquitination. In terms of biological role, probable substrate-specific adapter of a BCR (BTB-CUL3-RBX1) E3 ubiquitin-protein ligase complex mediating the ubiquitination and subsequent proteasomal degradation of target proteins. Promotes the ubiquitination of HDAC1. Can function as antagonist of the Hedgehog pathway by affecting the nuclear transfer of transcription factor GLI1; the function probably occurs via HDAC1 down-regulation, keeping GLI1 acetylated and inactive. Inhibits cell growth and tumorigenicity of medulloblastoma (MDB). This is BTB/POZ domain-containing protein KCTD21 (Kctd21) from Mus musculus (Mouse).